We begin with the raw amino-acid sequence, 309 residues long: GalNAc(5)-diNAcBac-PP-undecaprenol beta-1,3-glucosyltransferase (309 aa).

The chain crosses the membrane as a helical span at residues Ser-273–Ile-291.

This sequence belongs to the glycosyltransferase 2 family.

The protein localises to the membrane. It carries out the reaction [alpha-D-GalNAc-(1-&gt;4)]4-alpha-D-GalNAc-(1-&gt;3)-alpha-D-diNAcBac-tri-trans,hepta-cis-undecaprenyl diphosphate + UDP-alpha-D-glucose = [alpha-D-GalNAc-(1-&gt;4)]2-[beta-D-Glc-(1-&gt;3)]-[alpha-D-GalNAc-(1-&gt;4)]2-alpha-D-GalNAc-(1-&gt;3)-alpha-D-diNAcBac-tri-trans,hepta-cis-undecaprenyl diphosphate + UDP + H(+). Its pathway is protein modification; protein glycosylation. In terms of biological role, glucosyltransferase that adds he final branching glucose to complete the final heptasaccharide structure in the N-linked protein glycosylation pathway. The sequence is that of GalNAc(5)-diNAcBac-PP-undecaprenol beta-1,3-glucosyltransferase (pglI) from Campylobacter jejuni subsp. jejuni serotype O:2 (strain ATCC 700819 / NCTC 11168).